Reading from the N-terminus, the 804-residue chain is Ribonucleoside-diphosphate reductase large subunit-like protein (804 aa).

The protein belongs to the ribonucleoside diphosphate reductase large chain family.

The protein localises to the virion. Its subcellular location is the host cytoplasm. Its function is as follows. Does not possess a ribonucleotide reductase activity. Betaherpesviruses probably use another strategy to expand the dNTP pool in a quiescent host cell. The protein is Ribonucleoside-diphosphate reductase large subunit-like protein of Homo sapiens (Human).